The primary structure comprises 716 residues: DNA ligase (716 aa).

Residues 47 to 51 (DATYD), 96 to 97 (SL), and E130 each bind NAD(+). K132 functions as the N6-AMP-lysine intermediate in the catalytic mechanism. NAD(+) contacts are provided by R153, E190, K306, and K330. Zn(2+) is bound by residues C435, C438, C453, and C459. The BRCT domain occupies 638–716 (RSDSAVAGKT…EDEWLKLIEG (79 aa)).

Belongs to the NAD-dependent DNA ligase family. LigA subfamily. It depends on Mg(2+) as a cofactor. The cofactor is Mn(2+).

The catalysed reaction is NAD(+) + (deoxyribonucleotide)n-3'-hydroxyl + 5'-phospho-(deoxyribonucleotide)m = (deoxyribonucleotide)n+m + AMP + beta-nicotinamide D-nucleotide.. In terms of biological role, DNA ligase that catalyzes the formation of phosphodiester linkages between 5'-phosphoryl and 3'-hydroxyl groups in double-stranded DNA using NAD as a coenzyme and as the energy source for the reaction. It is essential for DNA replication and repair of damaged DNA. In Nitrobacter winogradskyi (strain ATCC 25391 / DSM 10237 / CIP 104748 / NCIMB 11846 / Nb-255), this protein is DNA ligase.